A 1356-amino-acid chain; its full sequence is Partitioning defective 3 homolog (1356 aa).

Serine 25 bears the Phosphoserine mark. Disordered regions lie at residues 81–100 (EQDP…GTQS) and 154–262 (SVSD…GLEH). A Phosphothreonine modification is found at threonine 91. Over residues 91–100 (TSASSTGTQS) the composition is skewed to low complexity. Composition is skewed to polar residues over residues 154–163 (SVSDSNFSSE) and 171–187 (TRWS…TAGS). Phosphoserine occurs at positions 156 and 174. Over residues 190 to 203 (TCDRKKDENYRSLP) the composition is skewed to basic and acidic residues. Positions 204 to 224 (RDTSNWSNQFQRDNARSSLSA) are enriched in polar residues. A compositionally biased stretch (basic and acidic residues) spans 246–260 (DNSRVEPVGHADTGL). The PDZ 1 domain occupies 271–359 (MVKLVEVPND…TPIIWFHVVP (89 aa)). Serine 383 is subject to Phosphoserine. The segment at 408-448 (LNHPPEQIDSHSRLPHSAHPSGKPPSAPASAPQNVFSTTVS) is disordered. PDZ domains lie at 461–546 (NIQL…LVFR) and 590–677 (EVPL…GMIQ). Tyrosine 489 carries the post-translational modification Phosphotyrosine. A phosphoserine mark is found at serine 692, serine 695, serine 715, serine 728, alanine 792, serine 809, and serine 827. Residues 712 to 936 (RRISHSLYSG…AAIDKSYDKP (225 aa)) form an interaction with PRKCI and PRKCZ region. N6-acetyllysine is present on lysine 834. At serine 837 the chain carries Phosphoserine. Lysine 851 carries the N6-acetyllysine modification. A phosphoserine mark is found at serine 852 and serine 873. 2 disordered regions span residues 865-886 (TVDD…GLKK) and 932-1025 (SYDK…DMFR). Position 885 is an N6-acetyllysine (lysine 885). The interval 935 to 1356 (KPAVDDDDEG…TPEKGRPFYS (422 aa)) is interaction with FRMD4A. Positions 939 to 953 (DDDDEGMETLEEDTE) are enriched in acidic residues. Serine 962 bears the Phosphoserine; by AURKA mark. Residues 968-982 (DQPSHSLERQMNGNQ) are compositionally biased toward polar residues. Residues serine 971 and serine 973 each carry the phosphoserine modification. A compositionally biased stretch (basic and acidic residues) spans 983-1009 (EKGDKTDRKKDKTGKEKKKDRDKEKDK). A Phosphoserine modification is found at serine 1046. A coiled-coil region spans residues 1049-1077 (SEEERIRMKQEQERIQAKTREFRERQARE). Positions 1129–1356 (QVKKPRNSKP…TPEKGRPFYS (228 aa)) are disordered. Positions 1136 to 1149 (SKPSPVDSNRSTPS) are enriched in polar residues. Basic and acidic residues predominate over residues 1150-1177 (NHDRIQRLRQEFQQAKQDEDVEDRRRTY). Coiled coils occupy residues 1151–1174 (HDRI…EDRR), 1201–1224 (VQMQ…YSSL), and 1280–1301 (MLET…MKKQ). A compositionally biased stretch (low complexity) spans 1196-1205 (SVSVEVQMQR). Positions 1221 to 1245 (YSSLPRQSRKNASSVSQDSWEQNYS) are enriched in polar residues. Basic and acidic residues predominate over residues 1285–1298 (ELLRQEQRRKEQQM). The segment covering 1337–1346 (SQVARLNRLQ) has biased composition (polar residues). Basic and acidic residues predominate over residues 1347–1356 (TPEKGRPFYS). Lysine 1350 bears the N6-acetyllysine mark.

This sequence belongs to the PAR3 family. In terms of assembly, interacts (via PDZ 1 domain) with F11R/JAM1, PARD6A and PARD6B. Interacts with PRCKI and CDH5. Interacts (via PDZ 3 domain) with PTEN (via C-terminus). Part of a complex with PARD6A or PARD6B, PRKCI or PRKCZ and CDC42 or RAC1. Component of a complex whose core is composed of ARHGAP17, AMOT, PALS1, PATJ and PARD3/PAR3. Interacts with LIMK2, AURKA and AURKB. Component of the Par polarity complex, composed of at least phosphorylated PRKCZ, PARD3 and TIAM1. Directly interacts with TIAM1 and TIAM2. Interacts with ECT2, FBF1 and SIRT2. Interacts (via coiled-coil domain) with FRMD4A. Found in a complex with PARD3, CYTH1 and FRMD4A. Interacts with SAPCD2. Interacts with PRKCA. As to quaternary structure, interacts with PRKCZ. In terms of processing, acetylated. Deacetylated by SIRT2, thereby inhibiting Schwann cell peripheral myelination. Post-translationally, phosphorylation at Ser-827 by PRKCZ and PRKCI occurs at the most apical tip of epithelial cell-cell contacts during the initial phase of tight junction formation and may promote dissociation of the complex with PARD6. EGF-induced Tyr-1127 phosphorylation mediates dissociation from LIMK2. Phosphorylation by AURKA at Ser-962 is required for the normal establishment of neuronal polarity. As to expression, widely expressed.

Its subcellular location is the cytoplasm. It is found in the endomembrane system. It localises to the cell junction. The protein resides in the tight junction. The protein localises to the adherens junction. Its subcellular location is the cell membrane. It is found in the cell cortex. It localises to the cytoskeleton. In terms of biological role, adapter protein involved in asymmetrical cell division and cell polarization processes. Seems to play a central role in the formation of epithelial tight junctions. Targets the phosphatase PTEN to cell junctions. Involved in Schwann cell peripheral myelination. Association with PARD6B may prevent the interaction of PARD3 with F11R/JAM1, thereby preventing tight junction assembly. The PARD6-PARD3 complex links GTP-bound Rho small GTPases to atypical protein kinase C proteins. Required for establishment of neuronal polarity and normal axon formation in cultured hippocampal neurons. The chain is Partitioning defective 3 homolog from Homo sapiens (Human).